An 876-amino-acid polypeptide reads, in one-letter code: Leucine--tRNA ligase (876 aa).

The short motif at 42–52 (PYPSGKLHMGH) is the 'HIGH' region element. The short motif at 634–638 (KMSKS) is the 'KMSKS' region element. Lys637 serves as a coordination point for ATP.

Belongs to the class-I aminoacyl-tRNA synthetase family.

It localises to the cytoplasm. The enzyme catalyses tRNA(Leu) + L-leucine + ATP = L-leucyl-tRNA(Leu) + AMP + diphosphate. The polypeptide is Leucine--tRNA ligase (Neisseria meningitidis serogroup B (strain ATCC BAA-335 / MC58)).